We begin with the raw amino-acid sequence, 608 residues long: X-ray repair cross-complementing protein 6 (608 aa).

A compositionally biased stretch (basic and acidic residues) spans 1 to 11 (MSEWESYYKTE). Residues 1–29 (MSEWESYYKTEGEEEEEEEESPDTGGEYK) form a disordered region. S2 carries the N-acetylserine modification. The residue at position 2 (S2) is a Phosphoserine. S6 is modified (phosphoserine; by PRKDC). Positions 12-22 (GEEEEEEEESP) are enriched in acidic residues. Residue K29 is the Schiff-base intermediate with DNA; for 5'-deoxyribose-5-phosphate lyase activity of the active site. Position 29 is an N6-acetyllysine (K29). At S49 the chain carries Phosphoserine; by PRKDC. The Ku domain occupies 259 to 466 (FKLGEDVVLM…IDKMKAIVQK (208 aa)). Residues 275–339 (VQKANKPFPV…EETEELKRFD (65 aa)) are DNA-binding. K315 is covalently cross-linked (Glycyl lysine isopeptide (Lys-Gly) (interchain with G-Cter in SUMO2)). An N6-acetyllysine mark is found at K329, K336, and K459. Positions 371-480 (SLVSGSSTLF…YRSDSFENPV (110 aa)) are interaction with XRCC5. A phosphoserine mark is found at S475, S518, and S548. The segment at 534 to 557 (PEGKVAKRKQDDEGSTSKKPKVEL) is disordered. Over residues 537-557 (KVAKRKQDDEGSTSKKPKVEL) the composition is skewed to basic and acidic residues. The interval 548–607 (STSKKPKVELSEEELKAHFRKGTLGKLTVPTLKDICKAHGLKSGPKKQELLDALIRHLEK) is interaction with DEAF1. K554 is covalently cross-linked (Glycyl lysine isopeptide (Lys-Gly) (interchain with G-Cter in SUMO2)). A Phosphoserine modification is found at S558. N6,N6,N6-trimethyllysine is present on K568. The region spanning 571 to 605 (LGKLTVPTLKDICKAHGLKSGPKKQELLDALIRHL) is the SAP domain. Positions 576 to 581 (VPTLKD) are interaction with BAX.

The protein belongs to the ku70 family. In terms of assembly, heterodimer composed of XRCC5/Ku80 and XRCC6/Ku70. Component of the core long-range non-homologous end joining (NHEJ) complex (also named DNA-PK complex) composed of PRKDC, LIG4, XRCC4, XRCC6/Ku70, XRCC5/Ku86 and NHEJ1/XLF. Additional component of the NHEJ complex includes PAXX. Following autophosphorylation, PRKDC dissociates from DNA, leading to formation of the short-range NHEJ complex, composed of LIG4, XRCC4, XRCC6/Ku70, XRCC5/Ku86 and NHEJ1/XLF. The XRCC5-XRCC6 dimer also associates with NAA15, and this complex binds to the osteocalcin promoter and activates osteocalcin expression. In addition, XRCC6 interacts with the osteoblast-specific transcription factors MSX2, RUNX2 and DLX5. Interacts with ELF3. Interacts with ATP23. The XRCC5-XRRC6 dimer associates in a DNA-dependent manner with APEX1. Binds to CDK9. Identified in a complex with DEAF1 and XRCC5. Interacts with DEAF1 (via the SAND domain); the interaction is direct and may be inhibited by DNA-binding. Interacts with CLU. Interacts with NR4A3; the DNA-dependent protein kinase complex DNA-PK phosphorylates and activates NR4A3 and prevents NR4A3 ubiquitinylation and degradation. Interacts with CYREN (via KBM motif). Interacts (via N-terminus) with HSF1 (via N-terminus); this interaction is direct and prevents XRCC5/XRCC6 heterodimeric binding and non-homologous end joining (NHEJ) repair activities induced by ionizing radiation (IR). Part of the HDP-RNP complex composed of at least HEXIM1, PRKDC, XRCC5, XRCC6, paraspeckle proteins (SFPQ, NONO, PSPC1, RBM14, and MATR3) and NEAT1 RNA. Interacts with HMBOX1. Interacts with ATF7. Interacts with APLF (via KBM motif). Interacts with WRN (via KBM motif). The XRCC5-XRCC6 dimer associates with ALKBH2. Interacts with TPRN; TPRN interacts with a number of DNA damage response proteins, is recruited to sites of DNA damage and may play a role in DNA damage repair. When not acetylated, interacts with BAX. Interacts with ERCC6L2. In terms of processing, phosphorylation by PRKDC may enhance helicase activity. Phosphorylation of Ser-49 does not affect DNA repair. ADP-ribosylated by PARP3. Post-translationally, methylation by SETD4 leads to accumulation in the cytoplasm and is a prerequisite for acetylation, possibly due to the change of subcellular from the nucleus to the cytosol initiated by methylation, acetylation occurring in the cytosol. In terms of processing, acetylation can be catalyzed in vitro by CREBBP/CBP and KAT2B/PCAF.

The protein localises to the nucleus. Its subcellular location is the chromosome. It localises to the cytoplasm. Functionally, single-stranded DNA-dependent ATP-dependent helicase that plays a key role in DNA non-homologous end joining (NHEJ) by recruiting DNA-PK to DNA. Required for double-strand break repair and V(D)J recombination. Also has a role in chromosome translocation. Has a role in chromosome translocation. The DNA helicase II complex binds preferentially to fork-like ends of double-stranded DNA in a cell cycle-dependent manner. It works in the 3'-5' direction. During NHEJ, the XRCC5-XRRC6 dimer performs the recognition step: it recognizes and binds to the broken ends of the DNA and protects them from further resection. Binding to DNA may be mediated by XRCC6. The XRCC5-XRRC6 dimer acts as a regulatory subunit of the DNA-dependent protein kinase complex DNA-PK by increasing the affinity of the catalytic subunit PRKDC to DNA by 100-fold. The XRCC5-XRRC6 dimer is probably involved in stabilizing broken DNA ends and bringing them together. The assembly of the DNA-PK complex to DNA ends is required for the NHEJ ligation step. Probably also acts as a 5'-deoxyribose-5-phosphate lyase (5'-dRP lyase), by catalyzing the beta-elimination of the 5' deoxyribose-5-phosphate at an abasic site near double-strand breaks. 5'-dRP lyase activity allows to 'clean' the termini of abasic sites, a class of nucleotide damage commonly associated with strand breaks, before such broken ends can be joined. The XRCC5-XRRC6 dimer together with APEX1 acts as a negative regulator of transcription. In association with NAA15, the XRCC5-XRRC6 dimer binds to the osteocalcin promoter and activates osteocalcin expression. Plays a role in the regulation of DNA virus-mediated innate immune response by assembling into the HDP-RNP complex, a complex that serves as a platform for IRF3 phosphorylation and subsequent innate immune response activation through the cGAS-STING pathway. Negatively regulates apoptosis by interacting with BAX and sequestering it from the mitochondria. Might have deubiquitination activity, acting on BAX. The protein is X-ray repair cross-complementing protein 6 (Xrcc6) of Mus musculus (Mouse).